The primary structure comprises 203 residues: Large ribosomal subunit protein bL25 (203 aa).

It belongs to the bacterial ribosomal protein bL25 family. CTC subfamily. In terms of assembly, part of the 50S ribosomal subunit; part of the 5S rRNA/L5/L18/L25 subcomplex. Contacts the 5S rRNA. Binds to the 5S rRNA independently of L5 and L18.

In terms of biological role, this is one of the proteins that binds to the 5S RNA in the ribosome where it forms part of the central protuberance. This chain is Large ribosomal subunit protein bL25, found in Psychromonas ingrahamii (strain DSM 17664 / CCUG 51855 / 37).